The primary structure comprises 252 residues: Diphthine synthase (252 aa).

Residues Leu9, Asp85, Val88, 113–114 (SI), Leu165, Ala202, and His227 each bind S-adenosyl-L-methionine.

This sequence belongs to the diphthine synthase family. Homodimer.

The enzyme catalyses 2-[(3S)-amino-3-carboxypropyl]-L-histidyl-[translation elongation factor 2] + 3 S-adenosyl-L-methionine = diphthine-[translation elongation factor 2] + 3 S-adenosyl-L-homocysteine + 3 H(+). It functions in the pathway protein modification; peptidyl-diphthamide biosynthesis. Functionally, S-adenosyl-L-methionine-dependent methyltransferase that catalyzes the trimethylation of the amino group of the modified target histidine residue in translation elongation factor 2 (EF-2), to form an intermediate called diphthine. The three successive methylation reactions represent the second step of diphthamide biosynthesis. The polypeptide is Diphthine synthase (Methanospirillum hungatei JF-1 (strain ATCC 27890 / DSM 864 / NBRC 100397 / JF-1)).